The sequence spans 130 residues: Profilin-1 (130 aa).

This sequence belongs to the profilin family. In terms of assembly, interacts with actin. Interacts with RHO1 (GTP-bound form).

Its subcellular location is the cytoplasm. It localises to the cytoskeleton. It is found in the cell projection. The protein resides in the phagocytic cup. The protein localises to the cytoplasmic vesicle. Its subcellular location is the phagosome. In terms of biological role, binds to actin and affects the structure of the cytoskeleton. At high concentrations, profilin prevents the polymerization of actin, whereas it enhances it at low concentrations. By binding to PIP2, it inhibits the formation of IP3 and DG. The chain is Profilin-1 from Entamoeba histolytica (strain ATCC 30459 / HM-1:IMSS / ABRM).